Here is a 450-residue protein sequence, read N- to C-terminus: Tubulin alpha-3 chain (450 aa).

The GTP site is built by Q11, E71, G144, T145, T179, N206, and N228. E71 is a binding site for Mg(2+). Residue E254 is part of the active site.

The protein belongs to the tubulin family. As to quaternary structure, dimer of alpha and beta chains. A typical microtubule is a hollow water-filled tube with an outer diameter of 25 nm and an inner diameter of 15 nM. Alpha-beta heterodimers associate head-to-tail to form protofilaments running lengthwise along the microtubule wall with the beta-tubulin subunit facing the microtubule plus end conferring a structural polarity. Microtubules usually have 13 protofilaments but different protofilament numbers can be found in some organisms and specialized cells. Mg(2+) serves as cofactor. Post-translationally, undergoes a tyrosination/detyrosination cycle, the cyclic removal and re-addition of a C-terminal tyrosine residue by the enzymes tubulin tyrosine carboxypeptidase (TTCP) and tubulin tyrosine ligase (TTL), respectively.

Its subcellular location is the cytoplasm. The protein resides in the cytoskeleton. It catalyses the reaction GTP + H2O = GDP + phosphate + H(+). In terms of biological role, tubulin is the major constituent of microtubules, a cylinder consisting of laterally associated linear protofilaments composed of alpha- and beta-tubulin heterodimers. Microtubules grow by the addition of GTP-tubulin dimers to the microtubule end, where a stabilizing cap forms. Below the cap, tubulin dimers are in GDP-bound state, owing to GTPase activity of alpha-tubulin. The protein is Tubulin alpha-3 chain (TUBA3) of Eleusine indica (Goosegrass).